The chain runs to 632 residues: MTHEFTENYDVIVIGAGHAGVEASLATSRMGCKTLLATINLDMLAFMPCNPSIGGSAKGIVVREIDALGGEMGKNIDKTYIQMKMLNTGKGPAVRALRAQADKSLYAREMKHTVEKQANLTLRQTMIDDILVEDGRVVGVLTATGQKFAAKAVVVTTGTALRGEIILGELKYSSGPNNSLASVTLADNLKKLGLEIGRFKTGTPPRVKASSINYDQTEIQPGDDKPNHFSFMSKDADYLKDQIPCWLTYTNQTSHDIINQNLYRAPMFSGIVKGVGPRYCPSIEDKIVRFADKERHQLFLEPEGRDTEEVYVQGLSTSLPEDVQKDLIHSIKGLEKAEMMRTGYAIEYDIVLPHQLRATLETKLISGLFTAGQTNGTSGYEEAAGQGLIAGINAALKVQGKPELILKRSDAYIGVMIDDLVTKGTLEPYRLLTSRAEYRLILRHDNADMRLTEIGRDIGLVDDERWKAFEIKKNQFDNELKRLNSIKLKPVKATNDRVQELGFKPLTDAMTAKEFMRRPEIDYATAVSFVGPAAEDLDAKIIELLETEIKYEGYIRKALDQVAKMKRMEEKRIPANIDWDAIDSIATEARQKFKKINPETIGQASRISGVNPADISILMIYLEGNGKAHRKY.

FAD contacts are provided by residues 15-20, Ile127, and Ser182; that span reads GAGHAG. An NAD(+)-binding site is contributed by 276 to 290; it reads GPRYCPSIEDKIVRF. Residue Gln373 coordinates FAD.

This sequence belongs to the MnmG family. Homodimer. Heterotetramer of two MnmE and two MnmG subunits. It depends on FAD as a cofactor.

It is found in the cytoplasm. NAD-binding protein involved in the addition of a carboxymethylaminomethyl (cmnm) group at the wobble position (U34) of certain tRNAs, forming tRNA-cmnm(5)s(2)U34. This Streptococcus pyogenes serotype M4 (strain MGAS10750) protein is tRNA uridine 5-carboxymethylaminomethyl modification enzyme MnmG.